Consider the following 37-residue polypeptide: Large ribosomal subunit protein bL36 (37 aa).

It belongs to the bacterial ribosomal protein bL36 family.

This chain is Large ribosomal subunit protein bL36, found in Salinispora arenicola (strain CNS-205).